We begin with the raw amino-acid sequence, 258 residues long: Alpha-fibrinogenase albofibrase (258 aa).

The signal sequence occupies residues 1–18 (MVLIRVLANLLILQLSYA). A propeptide spanning residues 19 to 24 (QKSSEL) is cleaved from the precursor. The Peptidase S1 domain occupies 25–249 (VVGGDECNIN…YNDWIQSIIA (225 aa)). Disulfide bonds link cysteine 31/cysteine 163, cysteine 50/cysteine 66, cysteine 98/cysteine 256, cysteine 142/cysteine 210, cysteine 174/cysteine 189, and cysteine 200/cysteine 225. Asparagine 44 carries N-linked (GlcNAc...) asparagine glycosylation. Active-site charge relay system residues include histidine 65 and aspartate 110. Residue serine 204 is the Charge relay system of the active site.

Belongs to the peptidase S1 family. Snake venom subfamily. As to quaternary structure, monomer. In terms of tissue distribution, expressed by the venom gland.

It is found in the secreted. In terms of biological role, the recombinant protein has fibrinogenolytic activity against the Aalpha chain (FGA) of fibrinogen. Activates plasminogen (PLG) (is 4-fold less active than urokinase). Has weak thrombin-like enzyme activity. Has enzymatic activity against a trypsin-like substrate (S-3013) and shows a weaker activity on an activated protein C substrate (S-3125). The protein is Alpha-fibrinogenase albofibrase of Trimeresurus albolabris (White-lipped pit viper).